A 59-amino-acid chain; its full sequence is UPF0434 protein LHK_01103 (59 aa).

It belongs to the UPF0434 family.

The protein is UPF0434 protein LHK_01103 of Laribacter hongkongensis (strain HLHK9).